A 215-amino-acid polypeptide reads, in one-letter code: Ribosomal RNA small subunit methyltransferase G (215 aa).

S-adenosyl-L-methionine contacts are provided by G71, L76, and R135.

This sequence belongs to the methyltransferase superfamily. RNA methyltransferase RsmG family.

It localises to the cytoplasm. Its function is as follows. Specifically methylates the N7 position of a guanine in 16S rRNA. This Salinibacter ruber (strain DSM 13855 / M31) protein is Ribosomal RNA small subunit methyltransferase G.